Reading from the N-terminus, the 260-residue chain is D-threitol dehydrogenase (260 aa).

21 to 50 serves as a coordination point for NAD(+); the sequence is LVTGAASGIGAAIASAYATKGARIAAVDLN. The active-site Proton acceptor is tyrosine 166. Position 170 (lysine 170) interacts with NAD(+).

This sequence belongs to the short-chain dehydrogenases/reductases (SDR) family.

The catalysed reaction is D-threitol + NAD(+) = D-erythrulose + NADH + H(+). It participates in carbohydrate metabolism; D-threitol degradation. Catalyzes the NAD-dependent reversible oxidation of D-threitol. Involved in the degradation pathway of D-threitol, that allows M.smegmatis to grow on this compound as the sole carbon source. Does not catalyze the oxidation of xylitol, L-sorbitol, and L-sorbose. The sequence is that of D-threitol dehydrogenase from Mycolicibacterium smegmatis (strain ATCC 700084 / mc(2)155) (Mycobacterium smegmatis).